A 238-amino-acid chain; its full sequence is Ribonuclease PH (238 aa).

Residues arginine 86 and 124–126 (GTR) each bind phosphate.

It belongs to the RNase PH family. Homohexameric ring arranged as a trimer of dimers.

The catalysed reaction is tRNA(n+1) + phosphate = tRNA(n) + a ribonucleoside 5'-diphosphate. In terms of biological role, phosphorolytic 3'-5' exoribonuclease that plays an important role in tRNA 3'-end maturation. Removes nucleotide residues following the 3'-CCA terminus of tRNAs; can also add nucleotides to the ends of RNA molecules by using nucleoside diphosphates as substrates, but this may not be physiologically important. Probably plays a role in initiation of 16S rRNA degradation (leading to ribosome degradation) during starvation. This chain is Ribonuclease PH, found in Haemophilus influenzae (strain PittGG).